Reading from the N-terminus, the 1489-residue chain is MEGVEDDLSKLLEELSSGVVLNNIQEKLNQSSPKLQSFIDDETGSNAEDVRRVLDAATDTESNYGGGANSITNTPNFNSHRGHQHLQLHTELSLDALRPVSENSPLHKSATRPISTSIRLPRLSVCEDDSSSSSSSSDGDSNSSSDSSDNSSEQSDDDDVHLHLHLHRHHRKVKEDEGDSFESSSESSEQYGSPSTLRRQEALKLEKIMQIQEKKKLLKEKLKEQDELELKEKQELNEITVQKEIKLKDKSNSVQNDIVDSDNNNNNNNNNSITIEEQQQEKQQQQQQHHHHHSTPNKPPKSRSVSISTPDSNIVVAGGNVISKERKRSILASFEEGSPMRSSSRLPSSRGGSIKIKVSKVLEEEMQLQQEFEKQEQLRHSARLSQLIRDLNMSSNLQDQQDQQLRKNENSNNNEGDDNNENVSNDNSSDNENQNINGSILIKEEQQEKIEITTTITTVITPPPPAQEPQHQQQPKILTPEEVEEERIRVLRIERMKDQVFSQLDELEDPLYSNGSRQRNGGGGGASTSAEPSMMQIPLTRLEDTASSSSSPTLQATKTTTTTTTTTTTTTTATLPINNKNLNIQGRPRKDSISDHWDIGRKEQPRRSMTLNIQRVGEDFSVKKAEAKKVNPDLEKILVHISLVDQSHKVICITEDFTVKDVIDLFSEKLGLVQTEFFSLAEVTSDGYDRWLDPNRAVKEAGIKNLSKLTFKIKYFKQPKKLSDSKAVHLYYLQIQQSVVNGTYPCSEAMSYRLSALQFYITFGAFDKDKHIAGFLDHGSLSEFIPSNFFFELTDEVIQKRLFHLHSQIKCSSSIEAKLRYLDLANKIPTFGVTSFQVFDGIRESSIVRQKRHLCVAEDGILISRKDRAGYDFFSYKEIISYQVTTRGLKIQIPHSSITPNTSETMSFDTSSYDQSNNIIDLMMGYKYFIQHDEFIRGIGAPVEQVDLNISLLLPLFQPPKIRTKSDPLRSRLELFKLNYLGLCQNFHTKPISKLIDQIDYILDKEGSFRNRLAFEKVELPSLNLRGSDLSFIADALKDTLNLIIEEGESIVENLNILSLDLSNNPLLATDAFEPLKIIMTCNTIIHLNLKNIGLSNKGVMPLVTIIEKYPNIETLQIGKNRVNESGVRVILRAIKNFNVKIETLGFEETNLTDSGCLIIDKLLSNNKTIKNLNISKNLITEEGFHHIFEGIKRNSLSLQDLNISGNKINSKLMIKFIKWLASSETSIITLNIAKTGLESSFGAELQKFLVGNSCHIKSLDTSYNDLGTSGTKNVIKGIINNQTITELSLCANKISSSGCNDLCQSLELASATCSKLYLRHCGLGSSSLVRIANMLELNKTITTLDLSMNEFSKSSSSAIGTMLEKNETLQEFYLADSSLGAREVESILNGLKNNSTIKKIFLDTNPIGKKGISSLANMLNTNTGLEVITLRHTNLNGKDILELLKQLSTNIPIKIINLTENTLDKITPQIKNAINDQIKRLHTINIQY.

Composition is skewed to polar residues over residues 59-79 and 103-118; these read DTESNYGGGANSITNTPNFNS and NSPLHKSATRPISTSI. Disordered regions lie at residues 59-86, 103-197, 252-271, and 277-312; these read DTESNYGGGANSITNTPNFNSHRGHQHL, NSPL…PSTL, NSVQNDIVDSDNNNNNNNNN, and EQQQEKQQQQQQHHHHHSTPNKPPKSRSVSISTPDS. Low complexity predominate over residues 131–153; that stretch reads SSSSSSSDGDSNSSSDSSDNSSE. The span at 163 to 172 shows a compositional bias: basic residues; sequence HLHLHRHHRK. A compositionally biased stretch (low complexity) spans 181–195; sequence FESSSESSEQYGSPS. Residues 202–289 adopt a coiled-coil conformation; that stretch reads ALKLEKIMQI…QEKQQQQQQH (88 aa). Low complexity predominate over residues 277–287; the sequence is EQQQEKQQQQQ. A compositionally biased stretch (polar residues) spans 303–312; it reads RSVSISTPDS. A coiled-coil region spans residues 356–383; sequence IKVSKVLEEEMQLQQEFEKQEQLRHSAR. Disordered regions lie at residues 396–435, 459–479, and 508–569; these read NLQDQQDQQLRKNENSNNNEGDDNNENVSNDNSSDNENQN, VITPPPPAQEPQHQQQPKILT, and EDPL…TTTT. A compositionally biased stretch (low complexity) spans 421 to 435; the sequence is ENVSNDNSSDNENQN. A compositionally biased stretch (polar residues) spans 545 to 555; that stretch reads TASSSSSPTLQ. Over residues 556-569 the composition is skewed to low complexity; that stretch reads ATKTTTTTTTTTTT. One can recognise an FERM domain in the interval 637–934; that stretch reads ILVHISLVDQ…GYKYFIQHDE (298 aa). 13 LRR repeats span residues 1017–1040, 1053–1075, 1087–1110, 1111–1133, 1167–1191, 1196–1219, 1254–1278, 1282–1306, 1339–1362, 1367–1391, 1395–1418, 1428–1450, and 1451–1474; these read KVELPSLNLRGSDLSFIADALKDT, ENLNILSLDLSNNPLLATDAFEP, HLNLKNIGLSNKGVMPLVTIIEKY, PNIETLQIGKNRVNESGVRVILR, NKTIKNLNISKNLITEEGFHHIFEG, SLSLQDLNISGNKINSKLMIKFIK, SCHIKSLDTSYNDLGTSGTKNVIKG, NQTITELSLCANKISSSGCNDLCQS, NKTITTLDLSMNEFSKSSSSAIGT, NETLQEFYLADSSLGAREVESILNG, NSTIKKIFLDTNPIGKKGISSLAN, VITLRHTNLNGKDILELLKQLST, and NIPIKIINLTENTLDKITPQIKNA.

This Dictyostelium discoideum (Social amoeba) protein is FERM domain-containing protein C (frmC).